Reading from the N-terminus, the 499-residue chain is Probable alpha-L-arabinofuranosidase B (499 aa).

The N-terminal stretch at 1 to 17 (MFSRRNLLALGLAATVS) is a signal peptide. The interval 18–335 (AGPCDIYEAG…ENIVAAKYVV (318 aa)) is catalytic. Cystine bridges form between Cys-21–Cys-31, Cys-81–Cys-86, and Cys-176–Cys-177. N-linked (GlcNAc...) asparagine glycosylation is present at Asn-83. The N-linked (GlcNAc...) asparagine glycan is linked to Asn-202. Asp-219 lines the substrate pocket. Glu-221 functions as the Nucleophile in the catalytic mechanism. The substrate site is built by Asn-222, Asn-223, Gly-296, His-416, Asn-418, Phe-419, Asp-435, His-463, Glu-465, Leu-468, and Asp-488. The ABD stretch occupies residues 336–499 (GSLVSGPSFT…SFEIETAFAS (164 aa)). Cysteines 401 and 439 form a disulfide.

This sequence belongs to the glycosyl hydrolase 54 family.

The protein localises to the secreted. It catalyses the reaction Hydrolysis of terminal non-reducing alpha-L-arabinofuranoside residues in alpha-L-arabinosides.. Its pathway is glycan metabolism; L-arabinan degradation. Alpha-L-arabinofuranosidase involved in the degradation of arabinoxylan, a major component of plant hemicellulose. Able to hydrolyze 1,5-, 1,3- and 1,2-alpha-linkages not only in L-arabinofuranosyl oligosaccharides, but also in polysaccharides containing terminal non-reducing L-arabinofuranoses in side chains, like L-arabinan, arabinogalactan and arabinoxylan. In Aspergillus awamori (Black koji mold), this protein is Probable alpha-L-arabinofuranosidase B (abfB).